The sequence spans 329 residues: Protein STRICTOSIDINE SYNTHASE-LIKE 11 (329 aa).

Positions 1 to 23 (MMRSFVSLISLLLLLSFSSSVLS) are cleaved as a signal peptide. Asn-37 and Asn-79 each carry an N-linked (GlcNAc...) asparagine glycan.

This sequence belongs to the strictosidine synthase family.

Its subcellular location is the vacuole. The enzyme catalyses 3alpha(S)-strictosidine + H2O = secologanin + tryptamine. Its pathway is alkaloid biosynthesis; 3alpha(S)-strictosidine biosynthesis; 3alpha(S)-strictosidine from secologanin and tryptamine: step 1/1. Functionally, catalyzes the stereospecific condensation of tryptamine with secologanin to form strictosidine, the key intermediate of indole alkaloid biosynthesis. The sequence is that of Protein STRICTOSIDINE SYNTHASE-LIKE 11 from Arabidopsis thaliana (Mouse-ear cress).